The following is a 500-amino-acid chain: UDP-N-acetylmuramoyl-L-alanyl-D-glutamate--2,6-diaminopimelate ligase (500 aa).

S38 contributes to the UDP-N-acetyl-alpha-D-muramoyl-L-alanyl-D-glutamate binding site. G118–S124 contacts ATP. UDP-N-acetyl-alpha-D-muramoyl-L-alanyl-D-glutamate-binding positions include T160–T161, S187, and R195. K227 carries the N6-carboxylysine modification. Residues R395, D419–R422, G471, and E475 each bind meso-2,6-diaminopimelate. A Meso-diaminopimelate recognition motif motif is present at residues D419 to R422.

This sequence belongs to the MurCDEF family. MurE subfamily. The cofactor is Mg(2+). Carboxylation is probably crucial for Mg(2+) binding and, consequently, for the gamma-phosphate positioning of ATP.

It is found in the cytoplasm. The enzyme catalyses UDP-N-acetyl-alpha-D-muramoyl-L-alanyl-D-glutamate + meso-2,6-diaminopimelate + ATP = UDP-N-acetyl-alpha-D-muramoyl-L-alanyl-gamma-D-glutamyl-meso-2,6-diaminopimelate + ADP + phosphate + H(+). Its pathway is cell wall biogenesis; peptidoglycan biosynthesis. Its function is as follows. Catalyzes the addition of meso-diaminopimelic acid to the nucleotide precursor UDP-N-acetylmuramoyl-L-alanyl-D-glutamate (UMAG) in the biosynthesis of bacterial cell-wall peptidoglycan. This Leptospira borgpetersenii serovar Hardjo-bovis (strain L550) protein is UDP-N-acetylmuramoyl-L-alanyl-D-glutamate--2,6-diaminopimelate ligase.